Consider the following 177-residue polypeptide: UPF0316 protein STH2077 (177 aa).

A run of 2 helical transmembrane segments spans residues 9–29 and 41–61; these read AALDLLIIFLAQATYVSVNTV and LASAISFFEVILWVYALGLVV.

Belongs to the UPF0316 family.

Its subcellular location is the cell membrane. The polypeptide is UPF0316 protein STH2077 (Symbiobacterium thermophilum (strain DSM 24528 / JCM 14929 / IAM 14863 / T)).